The primary structure comprises 577 residues: (E)-beta-farnesene synthase (577 aa).

Mg(2+) is bound by residues Asp-327, Asp-331, Asp-474, Ser-478, and Glu-482. The DDXXD motif signature appears at 327–331 (DDTFD).

Belongs to the terpene synthase family. Mg(2+) is required as a cofactor. Co(2+) serves as cofactor. Requires Mn(2+) as cofactor. Expressed in flowers.

The protein resides in the cytoplasm. The enzyme catalyses (2E,6E)-farnesyl diphosphate = (E)-beta-farnesene + diphosphate. It participates in secondary metabolite biosynthesis; terpenoid biosynthesis. Its activity is regulated as follows. Strongly inhibited by manganese at concentration higher than 20 uM. Sesquiterpene cyclase catalyzing the production of beta-farnesene from farnesyl diphosphate. Unable to use geranyl diphosphate as substrate. In Artemisia annua (Sweet wormwood), this protein is (E)-beta-farnesene synthase (CASC125).